Consider the following 364-residue polypeptide: uncharacterized protein (364 aa).

This is an uncharacterized protein from Escherichia coli (strain K12).